The sequence spans 154 residues: Superoxide dismutase [Cu-Zn] (154 aa).

Cu cation-binding residues include His47, His49, and His64. Cys58 and Cys147 are disulfide-bonded. Residues His64, His72, His81, and Asp84 each contribute to the Zn(2+) site. Residue His121 participates in Cu cation binding. The disordered stretch occupies residues 122-143; sequence GGTDDLGKGGNEESLKTGNAGP. A compositionally biased stretch (basic and acidic residues) spans 123–136; sequence GTDDLGKGGNEESL. Arg144 is a substrate binding site.

Belongs to the Cu-Zn superoxide dismutase family. Homodimer. Cu cation is required as a cofactor. It depends on Zn(2+) as a cofactor.

The protein localises to the cytoplasm. It catalyses the reaction 2 superoxide + 2 H(+) = H2O2 + O2. Destroys radicals which are normally produced within the cells and which are toxic to biological systems. The sequence is that of Superoxide dismutase [Cu-Zn] (SOD1) from Cordyceps militaris (Caterpillar fungus).